The primary structure comprises 716 residues: Tensin-4 (716 aa).

Residues 1-17 (MSQVMSSPLLAGGPAVG) form the signal peptide. 4 disordered regions span residues 119–274 (LPPG…VSML), 301–322 (QSSSRSLESPSSSSSSLNNLGP), 334–366 (VPSNATPSMGQPRATRSPPLAKEHASSCPPSIT), and 379–436 (GFPE…RDMQ). Over residues 138–150 (KKKEEPEALDIKY) the composition is skewed to basic and acidic residues. Over residues 197–206 (SSESLIFSGS) the composition is skewed to polar residues. A compositionally biased stretch (pro residues) spans 214 to 228 (PAPPSAVPSSHPPTS). At Ser248 the chain carries Phosphoserine. A compositionally biased stretch (polar residues) spans 265-274 (PQLSSRVSML). Polar residues predominate over residues 402–419 (ATSSSMPCPATRSHSQTL). Residues 449-556 (WFKPSISREQ…ALPCKLVIPQ (108 aa)) form the SH2 domain. The PTB domain maps to 583 to 704 (CHALYLSSVS…TLQPASQVIR (122 aa)).

The protein belongs to the PTEN phosphatase protein family. Interacts (via SH2 domain) with Rho GTPase-activating protein DLC1 (via C-terminus); the interaction is independent of DLC1 tyrosine phosphorylation. Interacts with integrin ITGB1; the interaction displaces tensin TNS3 from the ITGB1 cytoplasmic tail and promotes ITGB1 stability. Interacts (via SH2 domain) with E3 ubiquitin-protein ligase CBL (phosphorylated on 'Tyr-782'); the interaction is enhanced in the presence of EGF and reduces interaction of CBL with EGFR. Interacts (via SH2 domain) with receptor tyrosine kinase MET (when phosphorylated); the interaction increases MET protein stability.

It is found in the cell junction. It localises to the focal adhesion. Its subcellular location is the cytoplasm. The protein localises to the cytoskeleton. Its function is as follows. Promotes EGF-induced cell migration by displacing tensin TNS3 from the cytoplasmic tail of integrin ITGB1 which results in dissociation of TNS3 from focal adhesions, disassembly of actin stress fibers and initiation of cell migration. Suppresses ligand-induced degradation of EGFR by reducing EGFR ubiquitination in the presence of EGF. Increases MET protein stability by inhibiting MET endocytosis and subsequent lysosomal degradation which leads to increased cell survival, proliferation and migration. The sequence is that of Tensin-4 (TNS4) from Bos taurus (Bovine).